We begin with the raw amino-acid sequence, 859 residues long: Rod cGMP-specific 3',5'-cyclic phosphodiesterase subunit alpha (859 aa).

At Gly-2 the chain carries N-acetylglycine. GAF domains follow at residues 73-222 (QAEK…NLIM) and 254-431 (DIER…GWSV). The PDEase domain maps to 483-816 (EEEELAEILQ…KEWKALADEY (334 aa)). His-559 serves as the catalytic Proton donor. His-563, His-599, Asp-600, and Asp-720 together coordinate a divalent metal cation. Residues 821 to 859 (KGLEEEKQKQQAANQAAAGSQHGGKQPGGGPASKSCCVQ) form a disordered region. A compositionally biased stretch (low complexity) spans 830–840 (QQAANQAAAGS). The segment covering 841–851 (QHGGKQPGGGP) has biased composition (gly residues). Cys-856 bears the Cysteine methyl ester mark. Cys-856 is lipidated: S-farnesyl cysteine. Residues 857-859 (CVQ) constitute a propeptide, removed in mature form.

The protein belongs to the cyclic nucleotide phosphodiesterase family. In terms of assembly, oligomer composed of two catalytic chains (alpha and beta), an inhibitory chain (gamma) and the delta chain. A divalent metal cation serves as cofactor.

The protein localises to the cell membrane. The protein resides in the cell projection. Its subcellular location is the cilium. It localises to the photoreceptor outer segment. It catalyses the reaction 3',5'-cyclic GMP + H2O = GMP + H(+). In terms of biological role, rod-specific cGMP phosphodiesterase that catalyzes the hydrolysis of 3',5'-cyclic GMP. This protein participates in processes of transmission and amplification of the visual signal. The polypeptide is Rod cGMP-specific 3',5'-cyclic phosphodiesterase subunit alpha (Bos taurus (Bovine)).